The following is a 398-amino-acid chain: MVRKVAEQNLQKNNENDRELSKNVYLLGFTSFLNDMSSEMIMPILPMLITSVGGGSLSIGLVGGLREFISNILMVLIGYCSDKVRKRKIFVVLGYLTSSMFKLLLGLSKSWLGAVIFSSLERMGKGIRTAPRDAIISESMPKTLGKGFGIQRAFDTAGAILGSTLSLLFILYLQYSFNQIILIAAVIGFLTLIPLYFVKEKPSPSNNKITFRVGIKNLPKELKLFILISAIFTLSNFSYMFYILRAQEFLMIVDEKMAIIIPIALYILYNIFYATFSIPFGILSDKIGRKSVLTIGYIVYGIVSLGFAYFISQKSLILLFALYGIAYALFAGNQKAYVSDLSSEDIRATALGLFYTVVGLTSLPASLIAGYLWKISPEMTFLYGSVLAIISGLLLLFI.

Helical transmembrane passes span 43 to 65 (PILP…VGGL), 89 to 108 (IFVV…LGLS), 156 to 173 (TAGA…ILYL), 180 to 198 (IILI…LYFV), 224 to 246 (LFIL…ILRA), 259 to 281 (IIIP…IPFG), 291 to 311 (SVLT…AYFI), 316 to 338 (LILL…KAYV), 351 to 373 (LGLF…GYLW), and 380 to 397 (TFLY…LLLF).

This sequence belongs to the major facilitator superfamily.

Its subcellular location is the cell membrane. This is an uncharacterized protein from Methanocaldococcus jannaschii (strain ATCC 43067 / DSM 2661 / JAL-1 / JCM 10045 / NBRC 100440) (Methanococcus jannaschii).